The chain runs to 148 residues: Large ribosomal subunit protein bL28c (148 aa).

The transit peptide at 1–71 (MAASGMLISN…PLKPSLQPVA (71 aa)) directs the protein to the chloroplast.

Component of the chloroplast large ribosomal subunit (LSU). Mature 70S chloroplast ribosomes of higher plants consist of a small (30S) and a large (50S) subunit. The 30S small subunit contains 1 molecule of ribosomal RNA (16S rRNA) and 24 different proteins. The 50S large subunit contains 3 rRNA molecules (23S, 5S and 4.5S rRNA) and 33 different proteins.

The protein resides in the plastid. The protein localises to the chloroplast. Functionally, component of the chloroplast ribosome (chloro-ribosome), a dedicated translation machinery responsible for the synthesis of chloroplast genome-encoded proteins, including proteins of the transcription and translation machinery and components of the photosynthetic apparatus. This Spinacia oleracea (Spinach) protein is Large ribosomal subunit protein bL28c (RPL28).